The primary structure comprises 663 residues: A-type ATP synthase subunit I (663 aa).

7 helical membrane-spanning segments follow: residues 376–396 (FFFGFMLTDFLYGLIVGIVAA), 412–432 (FAYILLWSAFFTMLLGALFGS), 468–488 (LAALAIGLAHLFLGYTLGFVI), 497–517 (GAVFEQLPWMIIIIGVALLAS), 534–554 (IALFAVGELVINGGLAALMII), 568–588 (ARLMALALATGGIAMVINVLV), and 589–609 (GMVWAIKFLYIGPIIGLIIFF).

This sequence belongs to the V-ATPase 116 kDa subunit family. In terms of assembly, has multiple subunits with at least A(3), B(3), C, D, E, F, H, I and proteolipid K(x).

Its subcellular location is the cell membrane. Functionally, component of the A-type ATP synthase that produces ATP from ADP in the presence of a proton gradient across the membrane. In Thermococcus kodakarensis (strain ATCC BAA-918 / JCM 12380 / KOD1) (Pyrococcus kodakaraensis (strain KOD1)), this protein is A-type ATP synthase subunit I.